The primary structure comprises 105 residues: Mini zinc finger protein 2 (105 aa).

The disordered stretch occupies residues 1–29 (MGPQQDRSAAKPYANGSTAAAAAAGRKEN). Residues 35 to 84 (YRECQRNHAASIGGHAVDGCREFMASGADGTAAALLCAACGCHQSFHRRE) form a ZF-HD dimerization-type; degenerate zinc finger.

As to quaternary structure, homo- and heterodimers.

It localises to the cytoplasm. Functionally, inhibits zinc finger homeodomain (ZHD) transcription factors, by interacting with them to prevent both their nuclear localization and their DNA-binding properties. This Oryza sativa subsp. indica (Rice) protein is Mini zinc finger protein 2 (MIF2).